Here is a 351-residue protein sequence, read N- to C-terminus: Hydroxymethylglutaryl-CoA synthase (351 aa).

Aspartate 30 contributes to the (3S)-3-hydroxy-3-methylglutaryl-CoA binding site. Glutamate 82 serves as the catalytic Proton donor/acceptor. The (3S)-3-hydroxy-3-methylglutaryl-CoA site is built by cysteine 114, serine 155, threonine 203, and histidine 236. The active-site Acyl-thioester intermediate is the cysteine 114. Residue histidine 236 is the Proton donor/acceptor of the active site. Position 241 (arginine 241) interacts with CoA. (3S)-3-hydroxy-3-methylglutaryl-CoA contacts are provided by arginine 245, asparagine 268, and serine 298.

Belongs to the thiolase-like superfamily. Archaeal HMG-CoA synthase family. In terms of assembly, interacts with acetoacetyl-CoA thiolase that catalyzes the precedent step in the pathway and with a DUF35 protein. The acetoacetyl-CoA thiolase/HMG-CoA synthase complex channels the intermediate via a fused CoA-binding site, which allows for efficient coupling of the endergonic thiolase reaction with the exergonic HMGCS reaction.

It carries out the reaction acetoacetyl-CoA + acetyl-CoA + H2O = (3S)-3-hydroxy-3-methylglutaryl-CoA + CoA + H(+). It participates in metabolic intermediate biosynthesis; (R)-mevalonate biosynthesis; (R)-mevalonate from acetyl-CoA: step 2/3. Catalyzes the condensation of acetyl-CoA with acetoacetyl-CoA to form 3-hydroxy-3-methylglutaryl-CoA (HMG-CoA). Functions in the mevalonate (MVA) pathway leading to isopentenyl diphosphate (IPP), a key precursor for the biosynthesis of isoprenoid compounds that are building blocks of archaeal membrane lipids. This Pyrobaculum neutrophilum (strain DSM 2338 / JCM 9278 / NBRC 100436 / V24Sta) (Thermoproteus neutrophilus) protein is Hydroxymethylglutaryl-CoA synthase.